Here is a 2327-residue protein sequence, read N- to C-terminus: Chondroitin sulfate proteoglycan 4 (2327 aa).

The N-terminal stretch at 1–29 is a signal peptide; it reads MLLGPGHPLSAPALALALTLALLVRSTAP. Laminin G-like domains follow at residues 30–193 and 203–381; these read ASFF…HEGC and VGLG…SAGC. The segment at 30–640 is globular or compact configuration stabilized by disulfide bonds; sequence ASFFGENHLE…HRGGPAQDLT (611 aa). Residues 30–640 are neurite growth inhibition; that stretch reads ASFFGENHLE…HRGGPAQDLT (611 aa). Residues 30–2229 are Extracellular-facing; sequence ASFFGENHLE…LGFLEANMFS (2200 aa). N130 is a glycosylation site (N-linked (GlcNAc...) asparagine). C170 and C193 are joined by a disulfide. Residue N349 is glycosylated (N-linked (GlcNAc...) asparagine). A disulfide bond links C355 and C381. The N-linked (GlcNAc...) asparagine glycan is linked to N428. CSPG repeat units lie at residues 429-524, 554-646, and 663-765; these read FTQL…LEVS, PRII…VSDG, and AIQI…LEVQ. The tract at residues 575 to 1045 is interaction with COL6A2; it reads GPEIFQAYDP…RGGQRLLTTD (471 aa). The interval 632–1451 is interaction with COL5A1; the sequence is RGGPAQDLTF…SETQTDAFVL (820 aa). 2 N-linked (GlcNAc...) asparagine glycosylation sites follow: N686 and N773. 2 CSPG repeats span residues 784 to 883 and 903 to 994; these read TVWM…FRVT and NAPV…FVAT. O-linked (Xyl...) (chondroitin sulfate) serine glycosylation occurs at S1000. CSPG repeat units follow at residues 1023 to 1115, 1131 to 1221, 1243 to 1342, 1361 to 1454, 1478 to 1568, 1586 to 1684, 1709 to 1808, 1837 to 1929, and 1946 to 2034; these read APVQ…VSDG, YLHV…FSVA, PLQL…LDVA, TVIP…LLAN, PPVL…LSDG, LLSL…LLLS, PSRL…FRAH, PPQP…MSDG, and TIEV…VVAL. N-linked (GlcNAc...) asparagine glycosylation is found at N1136 and N1207. 2 N-linked (GlcNAc...) asparagine glycosylation sites follow: N1369 and N1454. Residues 1591 to 2226 form a neurite growth inhibition region; it reads GTRKLTVCPE…GGFLGFLEAN (636 aa). The interval 1592–2226 is cysteine-containing; sequence TRKLTVCPES…GGFLGFLEAN (635 aa). Residue N1650 is glycosylated (N-linked (GlcNAc...) asparagine). N-linked (GlcNAc...) asparagine glycosylation is found at N1914, N2021, N2039, N2045, and N2080. A CSPG 15 repeat occupies 2043–2152; sequence TVNVTVQALL…AGDRLTLELW (110 aa). The disordered stretch occupies residues 2190 to 2210; it reads ETEKPGRSVPTGQPGQAASSP. The segment covering 2199–2210 has biased composition (polar residues); sequence PTGQPGQAASSP. The helical transmembrane segment at 2230–2250 threads the bilayer; that stretch reads IIIPVCLILLLLALILPLLFY. At 2251-2327 the chain is on the cytoplasmic side; it reads LRKRNKTGKH…PALRNGQYWV (77 aa). The residue at position 2257 (T2257) is a Phosphothreonine; by PKC/PRKCA. The short motif at 2325–2327 is the PDZ-binding element; sequence YWV.

In terms of assembly, interacts with ITGA4 through its chondroitin sulfate glycosaminoglycan. Interacts with BCAR1, CDC42 and ACK1. Interacts with MMP16. Interacts with the first PDZ domain of MPDZ. Interacts with PRKCA. Interacts with LGALS3 and the integrin composed of ITGB1 and ITGA3. Binds TNC, laminin-1, COL5A1 and COL6A2. Interacts with PLG and angiostatin. Binds FGF2 and PDGFA. Interacts with GRIP1, GRIP2 and GRIA2. Forms a ternary complex with GRIP1 and GRIA2. Post-translationally, O-glycosylated; contains glycosaminoglycan chondroitin sulfate which are required for proper localization and function in stress fiber formation. Involved in interaction with MMP16 and ITGA4. In terms of processing, phosphorylation by PRKCA regulates its subcellular location and function in cell motility. As to expression, expressed in microcascular pericytes and not endothelial cells.

The protein localises to the cell membrane. It localises to the apical cell membrane. Its subcellular location is the cell projection. The protein resides in the lamellipodium membrane. It is found in the cell surface. Its function is as follows. Proteoglycan playing a role in cell proliferation and migration which stimulates endothelial cells motility during microvascular morphogenesis. May also inhibit neurite outgrowth and growth cone collapse during axon regeneration. Cell surface receptor for collagen alpha 2(VI) which may confer cells ability to migrate on that substrate. Binds through its extracellular N-terminus growth factors, extracellular matrix proteases modulating their activity. May regulate MPP16-dependent degradation and invasion of type I collagen participating in melanoma cells invasion properties. May modulate the plasminogen system by enhancing plasminogen activation and inhibiting angiostatin. Also functions as a signal transducing protein by binding through its cytoplasmic C-terminus scaffolding and signaling proteins. May promote retraction fiber formation and cell polarization through Rho GTPase activation. May stimulate alpha-4, beta-1 integrin-mediated adhesion and spreading by recruiting and activating a signaling cascade through CDC42, ACK1 and BCAR1. May activate FAK and ERK1/ERK2 signaling cascades. The chain is Chondroitin sulfate proteoglycan 4 (Cspg4) from Mus musculus (Mouse).